The following is a 343-amino-acid chain: N-acetyl-gamma-glutamyl-phosphate reductase (343 aa).

The active site involves Cys-149.

This sequence belongs to the NAGSA dehydrogenase family. Type 1 subfamily.

It is found in the cytoplasm. It carries out the reaction N-acetyl-L-glutamate 5-semialdehyde + phosphate + NADP(+) = N-acetyl-L-glutamyl 5-phosphate + NADPH + H(+). It functions in the pathway amino-acid biosynthesis; L-arginine biosynthesis; N(2)-acetyl-L-ornithine from L-glutamate: step 3/4. Functionally, catalyzes the NADPH-dependent reduction of N-acetyl-5-glutamyl phosphate to yield N-acetyl-L-glutamate 5-semialdehyde. The polypeptide is N-acetyl-gamma-glutamyl-phosphate reductase (Methanococcus maripaludis (strain C7 / ATCC BAA-1331)).